The following is a 152-amino-acid chain: Probable flagellum biosynthesis repressor protein FlbT (152 aa).

The protein belongs to the FlbT family.

Functionally, has a post-transcriptional repressor function in flagellum biogenesis. Associates with the 5'-UTR of fljK mRNA and promotes its degradation. The sequence is that of Probable flagellum biosynthesis repressor protein FlbT from Brucella abortus (strain S19).